The sequence spans 463 residues: UDP-N-acetylmuramoylalanine--D-glutamate ligase (463 aa).

Residue 126-132 (GSNGKST) coordinates ATP.

It belongs to the MurCDEF family.

The protein localises to the cytoplasm. It catalyses the reaction UDP-N-acetyl-alpha-D-muramoyl-L-alanine + D-glutamate + ATP = UDP-N-acetyl-alpha-D-muramoyl-L-alanyl-D-glutamate + ADP + phosphate + H(+). The protein operates within cell wall biogenesis; peptidoglycan biosynthesis. In terms of biological role, cell wall formation. Catalyzes the addition of glutamate to the nucleotide precursor UDP-N-acetylmuramoyl-L-alanine (UMA). The chain is UDP-N-acetylmuramoylalanine--D-glutamate ligase from Idiomarina loihiensis (strain ATCC BAA-735 / DSM 15497 / L2-TR).